Reading from the N-terminus, the 902-residue chain is Methionine--tRNA ligase, cytoplasmic (902 aa).

The GST C-terminal domain maps to 74-212; it reads GWEQDDLTNQ…QKQPQPQPPP (139 aa). The short motif at 275–285 is the 'HIGH' region element; that stretch reads PYVNNVPHLGN. The short motif at 595-599 is the 'KMSKS' region element; it reads KFSKS. Lys598 serves as a coordination point for ATP. Ser827 carries the post-translational modification Phosphoserine. Thr837 carries the phosphothreonine modification. The WHEP-TRS domain occupies 843 to 899; that stretch reads HIQTLTDEVTKQGNVVRELKAQKADKNQVAAEVAKLLDLKKQLALAEGKPIETPKGK.

The protein belongs to the class-I aminoacyl-tRNA synthetase family. Monomer. Part of a multisubunit complex that groups tRNA ligases for Arg (RARS1), Asp (DARS1), Gln (QARS1), Ile (IARS1), Leu (LARS1), Lys (KARS1), Met (MARS1) the bifunctional ligase for Glu and Pro (EPRS1) and the auxiliary subunits AIMP1/p43, AIMP2/p38 and EEF1E1/p18. Forms a linear complex that contains MARS1, EEF1E1, EPRS1 and AIMP2 that is at the core of the multisubunit complex.

Its subcellular location is the cytoplasm. The protein resides in the cytosol. It localises to the nucleus. It is found in the nucleolus. The catalysed reaction is tRNA(Met) + L-methionine + ATP = L-methionyl-tRNA(Met) + AMP + diphosphate. In terms of biological role, catalyzes the specific attachment of an amino acid to its cognate tRNA in a 2 step reaction: the amino acid (AA) is first activated by ATP to form AA-AMP and then transferred to the acceptor end of the tRNA. Plays a role in the synthesis of ribosomal RNA in the nucleolus. The sequence is that of Methionine--tRNA ligase, cytoplasmic (Mars1) from Mus musculus (Mouse).